Here is a 195-residue protein sequence, read N- to C-terminus: CASP-like protein Os03g0196400 (195 aa).

Residues 1–38 (MRQQQAGGVGDGVSPGNVPVCYYGPGGRVPSSLERRAR) lie on the Cytoplasmic side of the membrane. Residues 39-59 (AAEVLLRCAACGLAVLAAALL) traverse the membrane as a helical segment. Topologically, residues 60–81 (GADRQTRVFFSIQKVARYTDMQ) are extracellular. A helical membrane pass occupies residues 82 to 102 (SLVLLVIANGMAACYSLIQCA). Residues 103 to 104 (RC) lie on the Cytoplasmic side of the membrane. A helical transmembrane segment spans residues 105–125 (LVMAYIVISAVAAAMEAALIG). Over 126-150 (KYGQPEFQWMKTCHLYKRFCAQAGG) the chain is Extracellular. The helical transmembrane segment at 151 to 171 (GVACAIAASVNMVGVALISAF) threads the bilayer. The Cytoplasmic segment spans residues 172-195 (NLFRLYGNSNGGGKATTTTMAGGK).

This sequence belongs to the Casparian strip membrane proteins (CASP) family. In terms of assembly, homodimer and heterodimers.

The protein localises to the cell membrane. This Oryza sativa subsp. japonica (Rice) protein is CASP-like protein Os03g0196400.